The chain runs to 418 residues: Serine hydroxymethyltransferase (418 aa).

Residues leucine 121 and 125 to 127 (GHL) contribute to the (6S)-5,6,7,8-tetrahydrofolate site. Lysine 230 is modified (N6-(pyridoxal phosphate)lysine). 356 to 358 (SPF) contacts (6S)-5,6,7,8-tetrahydrofolate.

This sequence belongs to the SHMT family. In terms of assembly, homodimer. Pyridoxal 5'-phosphate serves as cofactor.

The protein resides in the cytoplasm. The catalysed reaction is (6R)-5,10-methylene-5,6,7,8-tetrahydrofolate + glycine + H2O = (6S)-5,6,7,8-tetrahydrofolate + L-serine. The protein operates within one-carbon metabolism; tetrahydrofolate interconversion. Its pathway is amino-acid biosynthesis; glycine biosynthesis; glycine from L-serine: step 1/1. In terms of biological role, catalyzes the reversible interconversion of serine and glycine with tetrahydrofolate (THF) serving as the one-carbon carrier. This reaction serves as the major source of one-carbon groups required for the biosynthesis of purines, thymidylate, methionine, and other important biomolecules. Also exhibits THF-independent aldolase activity toward beta-hydroxyamino acids, producing glycine and aldehydes, via a retro-aldol mechanism. This is Serine hydroxymethyltransferase from Pseudoalteromonas translucida (strain TAC 125).